A 571-amino-acid chain; its full sequence is Methionine--tRNA ligase (571 aa).

Positions 10-20 match the 'HIGH' region motif; it reads PYVNAVPHLGN. Cys-143, Cys-146, Cys-156, and Cys-159 together coordinate Zn(2+). Residues 333-337 carry the 'KMSKS' region motif; sequence KFSKS. An ATP-binding site is contributed by Lys-336.

This sequence belongs to the class-I aminoacyl-tRNA synthetase family. MetG type 1 subfamily. The cofactor is Zn(2+).

It localises to the cytoplasm. It catalyses the reaction tRNA(Met) + L-methionine + ATP = L-methionyl-tRNA(Met) + AMP + diphosphate. Functionally, is required not only for elongation of protein synthesis but also for the initiation of all mRNA translation through initiator tRNA(fMet) aminoacylation. In Sulfolobus acidocaldarius (strain ATCC 33909 / DSM 639 / JCM 8929 / NBRC 15157 / NCIMB 11770), this protein is Methionine--tRNA ligase.